Consider the following 97-residue polypeptide: UPF0235 protein Aasi_0294 (97 aa).

It belongs to the UPF0235 family.

This chain is UPF0235 protein Aasi_0294, found in Amoebophilus asiaticus (strain 5a2).